Reading from the N-terminus, the 365-residue chain is tRNA-specific 2-thiouridylase MnmA (365 aa).

ATP is bound by residues 14 to 21 and leucine 40; that span reads AMSGGVDS. The active-site Nucleophile is the cysteine 108. Residues cysteine 108 and cysteine 204 are joined by a disulfide bond. ATP is bound at residue glycine 132. Positions 154 to 156 are interaction with tRNA; the sequence is KDQ. The Cysteine persulfide intermediate role is filled by cysteine 204.

Belongs to the MnmA/TRMU family.

Its subcellular location is the cytoplasm. It carries out the reaction S-sulfanyl-L-cysteinyl-[protein] + uridine(34) in tRNA + AH2 + ATP = 2-thiouridine(34) in tRNA + L-cysteinyl-[protein] + A + AMP + diphosphate + H(+). Its function is as follows. Catalyzes the 2-thiolation of uridine at the wobble position (U34) of tRNA, leading to the formation of s(2)U34. The protein is tRNA-specific 2-thiouridylase MnmA of Rickettsia rickettsii (strain Iowa).